A 265-amino-acid polypeptide reads, in one-letter code: Di-trans,poly-cis-undecaprenyl-diphosphate synthase (265 aa).

An RXG motif; crucial for prenyltransferase activity motif is present at residues R236–G238.

This sequence belongs to the UPP synthase family. Requires Mg(2+) as cofactor.

It carries out the reaction 8 isopentenyl diphosphate + (2E,6E)-farnesyl diphosphate = di-trans,octa-cis-undecaprenyl diphosphate + 8 diphosphate. The protein operates within protein modification; protein glycosylation. It participates in lipid metabolism. Its function is as follows. Cis-prenyl transferase involved in the synthesis of dolichol, a long-chain polyprenol that is utilized as a sugar carrier in protein glycosylation in the endoplasmic reticulum (ER). Catalyzes the sequential condensation of isopentenyl pyrophosphate (IPP) with farnesyl pyrophosphate (FPP) to produce a polyprenyl pyrophosphate which contains 11 (major) and 12 (minor) isoprene units. The sequence is that of Di-trans,poly-cis-undecaprenyl-diphosphate synthase from Giardia intestinalis (strain ATCC 50803 / WB clone C6) (Giardia lamblia).